The chain runs to 270 residues: tRNA pseudouridine synthase A (270 aa).

The active-site Nucleophile is Asp60. Tyr118 provides a ligand contact to substrate.

The protein belongs to the tRNA pseudouridine synthase TruA family. As to quaternary structure, homodimer.

The catalysed reaction is uridine(38/39/40) in tRNA = pseudouridine(38/39/40) in tRNA. Formation of pseudouridine at positions 38, 39 and 40 in the anticodon stem and loop of transfer RNAs. This chain is tRNA pseudouridine synthase A, found in Salmonella typhimurium (strain LT2 / SGSC1412 / ATCC 700720).